The sequence spans 659 residues: Alpha-amylase (659 aa).

A signal peptide spans Met-1–Gly-27. Positions Pro-28–Glu-41 are excised as a propeptide. Asn-142, Thr-178, Asp-187, Gly-210, and Asp-212 together coordinate Ca(2+). The active-site Nucleophile is the Asp-217. His-221 is a Ca(2+) binding site. Residue Glu-249 is the Proton donor of the active site.

This sequence belongs to the glycosyl hydrolase 13 family. Monomer. Ca(2+) serves as cofactor.

It localises to the secreted. The enzyme catalyses Endohydrolysis of (1-&gt;4)-alpha-D-glucosidic linkages in polysaccharides containing three or more (1-&gt;4)-alpha-linked D-glucose units.. The protein is Alpha-amylase (amyE) of Bacillus subtilis (strain 168).